We begin with the raw amino-acid sequence, 396 residues long: Elongation factor Tu (396 aa).

Residues 10–205 (KSHANIGTIG…AVDEYIPTPE (196 aa)) form the tr-type G domain. Residues 19–26 (GHVDHGKT) are G1. 19–26 (GHVDHGKT) is a GTP binding site. Residue threonine 26 coordinates Mg(2+). Residues 61–65 (GITIS) are G2. The G3 stretch occupies residues 82–85 (DCPG). GTP contacts are provided by residues 82 to 86 (DCPGH) and 137 to 140 (NKCD). Positions 137-140 (NKCD) are G4. A G5 region spans residues 175–177 (SAL).

Belongs to the TRAFAC class translation factor GTPase superfamily. Classic translation factor GTPase family. EF-Tu/EF-1A subfamily. In terms of assembly, monomer.

The protein localises to the cytoplasm. It carries out the reaction GTP + H2O = GDP + phosphate + H(+). GTP hydrolase that promotes the GTP-dependent binding of aminoacyl-tRNA to the A-site of ribosomes during protein biosynthesis. The protein is Elongation factor Tu of Bacillus licheniformis (strain ATCC 14580 / DSM 13 / JCM 2505 / CCUG 7422 / NBRC 12200 / NCIMB 9375 / NCTC 10341 / NRRL NRS-1264 / Gibson 46).